The following is a 197-amino-acid chain: Superoxide dismutase [Fe] (197 aa).

Fe cation contacts are provided by His-26, His-75, Asp-157, and His-161.

This sequence belongs to the iron/manganese superoxide dismutase family. Homotetramer. The cofactor is Fe cation.

It carries out the reaction 2 superoxide + 2 H(+) = H2O2 + O2. Destroys superoxide anion radicals which are normally produced within the cells and which are toxic to biological systems. This is Superoxide dismutase [Fe] from Cupriavidus metallidurans (strain ATCC 43123 / DSM 2839 / NBRC 102507 / CH34) (Ralstonia metallidurans).